The chain runs to 696 residues: Caprolactamase subunit alpha (696 aa).

Belongs to the HyuA family. In terms of assembly, the caprolactamase is a heterotetramer composed of two alpha subunits (CapA) and two beta subunits (CapB).

Its activity is regulated as follows. Activity is dependent on the presence of ATP and bicarbonate. The requirement for bicarbonate may be related to allosteric activation through conformational effects, but it is also conceivable that carboxyphosphate is formed and acts as a mediator in caprolactam activation, forming carboxy- or phospholactim. Component of a caprolactamase involved in the degradation of caprolactam, an industrial compound mainly used in the production of Nylon 6. Catalyzes the ATP-dependent hydrolysis of the caprolactam ring to form 6-aminocaproic acid (6-ACA). The alpha subunit is responsible for ATP-dependent substrate phosphorylation. The enzyme cannot use 5-oxoproline. This Pseudomonas jessenii protein is Caprolactamase subunit alpha.